The following is a 155-amino-acid chain: Nascent polypeptide-associated complex subunit beta (155 aa).

2 disordered regions span residues 1–35 and 116–155; these read MDQA…SGAD and LAES…SNVE. Over residues 20–30 the composition is skewed to basic residues; sequence TPRRKVKKVHK. In terms of domain architecture, NAC-A/B spans 33-98; the sequence is GADDKKLQAT…GEEKELTELV (66 aa). Residues 136–155 show a composition bias toward acidic residues; sequence DEEDDIPDLVEGENFESNVE.

This sequence belongs to the NAC-beta family. As to quaternary structure, part of the nascent polypeptide-associated complex (NAC), consisting of egd2 and egd1. NAC associates with ribosomes via egd1.

Its subcellular location is the cytoplasm. The protein resides in the nucleus. Functionally, component of the nascent polypeptide-associated complex (NAC), a dynamic component of the ribosomal exit tunnel, protecting the emerging polypeptides from interaction with other cytoplasmic proteins to ensure appropriate nascent protein targeting. The NAC complex also promotes mitochondrial protein import by enhancing productive ribosome interactions with the outer mitochondrial membrane and blocks the inappropriate interaction of ribosomes translating non-secretory nascent polypeptides with translocation sites in the membrane of the endoplasmic reticulum. EGD1 may act as a transcription factor that exert a negative effect on the expression of several genes that are transcribed by RNA polymerase II. This is Nascent polypeptide-associated complex subunit beta (egd1) from Aspergillus niger (strain ATCC MYA-4892 / CBS 513.88 / FGSC A1513).